The chain runs to 544 residues: MKYIFVTGGVVSSLGKGVASASLGALLRARGYKVTAVKIDPYINIDAGTMRPYEHGECFVTASGAETDLDIGNYERFLDLDIPAGSNITTGQVYQEVIRKERAGDYLSQTVQVIPHVTDEIKRRIRAAGESAGAEIVLIEVGGTVGDIESLPFLEAIRQFRFDEGDDNVLYLHLTLVPYLGTSNEFKTKPTQHSVAALRSYGISPDIVMVRSKDKLPAEITRKIAAFTSVRENRVFSSYDVEHVYQVPLALEEQGLGKAVEELLGLEGTHPRLGVWTDAVRTIKHPKQQVTIAIAGKYTAMPDAYLSLMESLTHAGIANDARVNIKWVNAEQLAEAGAGELEGQFADVDGILVPGGFGIRGIEGKVKAAEYARTHGVPYLGICLGMQIAVIEYARHVAGIEDANSAEFDEYAKNKVIDLMPEQLEVAGMGGTMRLGDWPMELRAGTKIAELYGVPQGGTVKERHRHRYEVNPAYVEQLEAAGLTISGVTPGVEGRGAGLVETVEIADHPFFVALQAHPEFKSRPMRPSPPFAGFVKAALEHQQQ.

Positions 1-266 (MKYIFVTGGV…GKAVEELLGL (266 aa)) are amidoligase domain. Position 12 (Ser12) interacts with CTP. Ser12 provides a ligand contact to UTP. Residue 13–18 (SLGKGV) participates in ATP binding. Tyr53 provides a ligand contact to L-glutamine. Position 70 (Asp70) interacts with ATP. Residues Asp70 and Glu140 each coordinate Mg(2+). CTP-binding positions include 147 to 149 (DIE), 187 to 192 (KTKPTQ), and Lys223. Residues 187-192 (KTKPTQ) and Lys223 contribute to the UTP site. Positions 291–544 (TIAIAGKYTA…VKAALEHQQQ (254 aa)) constitute a Glutamine amidotransferase type-1 domain. Gly356 lines the L-glutamine pocket. Catalysis depends on Cys383, which acts as the Nucleophile; for glutamine hydrolysis. L-glutamine contacts are provided by residues 384-387 (LGMQ), Glu407, and Arg467. Residues His517 and Glu519 contribute to the active site.

Belongs to the CTP synthase family. As to quaternary structure, homotetramer.

It catalyses the reaction UTP + L-glutamine + ATP + H2O = CTP + L-glutamate + ADP + phosphate + 2 H(+). The catalysed reaction is L-glutamine + H2O = L-glutamate + NH4(+). The enzyme catalyses UTP + NH4(+) + ATP = CTP + ADP + phosphate + 2 H(+). It functions in the pathway pyrimidine metabolism; CTP biosynthesis via de novo pathway; CTP from UDP: step 2/2. With respect to regulation, allosterically activated by GTP, when glutamine is the substrate; GTP has no effect on the reaction when ammonia is the substrate. The allosteric effector GTP functions by stabilizing the protein conformation that binds the tetrahedral intermediate(s) formed during glutamine hydrolysis. Inhibited by the product CTP, via allosteric rather than competitive inhibition. Functionally, catalyzes the ATP-dependent amination of UTP to CTP with either L-glutamine or ammonia as the source of nitrogen. Regulates intracellular CTP levels through interactions with the four ribonucleotide triphosphates. The polypeptide is CTP synthase (Deinococcus radiodurans (strain ATCC 13939 / DSM 20539 / JCM 16871 / CCUG 27074 / LMG 4051 / NBRC 15346 / NCIMB 9279 / VKM B-1422 / R1)).